Reading from the N-terminus, the 261-residue chain is Kynurenine formamidase (261 aa).

Position 9 is a phosphoserine (S9). The HGGXW signature appears at 36-40; the sequence is HGGAW. S110 serves as the catalytic Nucleophile. Residues D211 and H243 contribute to the active site.

Belongs to the kynurenine formamidase family. In terms of assembly, homodimer.

The catalysed reaction is N-formyl-L-kynurenine + H2O = L-kynurenine + formate + H(+). It participates in amino-acid degradation; L-tryptophan degradation via kynurenine pathway; L-kynurenine from L-tryptophan: step 2/2. In terms of biological role, catalyzes the hydrolysis of N-formyl-L-kynurenine to L-kynurenine, the second step in the kynurenine pathway of tryptophan degradation. Kynurenine may be further oxidized to nicotinic acid, NAD(H) and NADP(H). Required for elimination of toxic metabolites. The sequence is that of Kynurenine formamidase from Saccharomyces cerevisiae (strain ATCC 204508 / S288c) (Baker's yeast).